A 381-amino-acid polypeptide reads, in one-letter code: Opsin Rh2 (381 aa).

The Extracellular segment spans residues 1-56 (MERSHLPETPFDLAHSGPRFQAQSSGNGSVLDNVLPDMAHLVNPYWSRFAPMDPMM). A glycan (N-linked (GlcNAc...) asparagine) is linked at Asn27. The chain crosses the membrane as a helical span at residues 57–81 (SKILGLFTLAIMIISCCGNGVVVYI). Residues 82–93 (FGGTKSLRTPAN) are Cytoplasmic-facing. A helical transmembrane segment spans residues 94-119 (LLVLNLAFSDFCMMASQSPVMIINFY). The Extracellular segment spans residues 120-133 (YETWVLGPLWCDIY). The cysteines at positions 130 and 207 are disulfide-linked. A helical transmembrane segment spans residues 134–153 (AGCGSLFGCVSIWSMCMIAF). The Cytoplasmic portion of the chain corresponds to 154 to 172 (DRYNVIVKGINGTPMTIKT). A helical membrane pass occupies residues 173-196 (SIMKILFIWMMAVFWTVMPLIGWS). Residues 197–220 (AYVPEGNLTACSIDYMTRMWNPRS) are Extracellular-facing. A helical membrane pass occupies residues 221-248 (YLITYSLFVYYTPLFLICYSYWFIIAAV). Residues 249–283 (AAHEKAMREQAKKMNVKSLRSSEDCDKSAEGKLAK) are Cytoplasmic-facing. The helical transmembrane segment at 284-307 (VALTTISLWFMAWTPYLVICYFGL) threads the bilayer. The Extracellular portion of the chain corresponds to 308-314 (FKIDGLT). Residues 315 to 339 (PLTTIWGATFAKTSAVYNPIVYGIS) form a helical membrane-spanning segment. Lys326 carries the N6-(retinylidene)lysine modification. Over 340-381 (HPKYRIVLKEKCPMCVFGNTDEPKPDAPASDTETTSEADSKA) the chain is Cytoplasmic. The tract at residues 359 to 381 (TDEPKPDAPASDTETTSEADSKA) is disordered. A compositionally biased stretch (polar residues) spans 370–381 (DTETTSEADSKA).

The protein belongs to the G-protein coupled receptor 1 family. Opsin subfamily. Phosphorylated on some or all of the serine and threonine residues present in the C-terminal region. As to expression, predominant opsin expressed in the dorsal ocelli.

The protein localises to the membrane. In terms of biological role, visual pigments are the light-absorbing molecules that mediate vision. They consist of an apoprotein, opsin, covalently linked to cis-retinal. The sequence is that of Opsin Rh2 (Rh2) from Drosophila melanogaster (Fruit fly).